Reading from the N-terminus, the 816-residue chain is H(+)/Cl(-) exchange transporter 5 (816 aa).

At methionine 1 to alanine 124 the chain is on the cytoplasmic side. Transmembrane regions (helical) follow at residues phenylalanine 125 to glycine 162 and valine 208 to phenylalanine 231. The short motif at glycine 237–proline 241 is the Selectivity filter part_1 element. A chloride-binding site is contributed by serine 238. Residues isoleucine 240–leucine 247 constitute an intramembrane region (helical). 2 helical membrane-spanning segments follow: residues leucine 256 to glycine 275 and glutamate 281 to asparagine 300. The short motif at glycine 279–proline 283 is the Selectivity filter part_2 element. Intramembrane regions (helical) lie at residues valine 312–alanine 324 and proline 328–leucine 336. The next 5 helical transmembrane spans lie at leucine 348–asparagine 366, leucine 389–cysteine 414, leucine 422–phenylalanine 442, methionine 498–methionine 518, and glycine 523–glycine 542. The Selectivity filter part_3 signature appears at glycine 523–proline 527. Phenylalanine 525 contributes to the chloride binding site. The helical intramembrane region spans glycine 570 to valine 584. The segment at residues threonine 585 to methionine 587 is an intramembrane region (note=Loop between two helices). Residues threonine 588 to threonine 599 constitute an intramembrane region (helical). The note=Loop between two helices intramembrane region spans glycine 600–tyrosine 604. The chain crosses the membrane as a helical span at residues isoleucine 605 to leucine 622. At glycine 623–asparagine 816 the chain is on the cytoplasmic side. Tyrosine 628 provides a ligand contact to chloride. CBS domains follow at residues methionine 656–lysine 720 and isoleucine 752–glutamate 811. ATP contacts are provided by residues threonine 666, tyrosine 687–glycine 689, and threonine 794–aspartate 797.

The protein belongs to the chloride channel (TC 2.A.49) family. ClC-5/CLCN5 subfamily. In terms of assembly, interacts with NEDD4 and NEDD4L. Ubiquitinated by NEDD4L in the presence of albumin; which promotes endocytosis and proteasomal degradation. Kidney specific.

The protein localises to the golgi apparatus membrane. The protein resides in the endosome membrane. Its subcellular location is the cell membrane. It catalyses the reaction 2 chloride(in) + H(+)(out) = 2 chloride(out) + H(+)(in). Functionally, proton-coupled chloride transporter. Functions as antiport system and exchanges chloride ions against protons. Important for normal acidification of the endosome lumen. May play an important role in renal tubular function. The CLC channel family contains both chloride channels and proton-coupled anion transporters that exchange chloride or another anion for protons. The absence of conserved gating glutamate residues is typical for family members that function as channels. The polypeptide is H(+)/Cl(-) exchange transporter 5 (Clcn5) (Rattus norvegicus (Rat)).